The primary structure comprises 172 residues: MSYNCCSGNFSSRSCGGYLHYPASSCGFSYPSNQVYSTDLCSPSTCQLGSSLYRGCQQTCWEPTSCQTSYVESSPCQTSCYRPRTSLLCSPCQTTYSGSLGFGSSSCRSLGYGSRSCYSVGCGSSGFRSLGYGGCGFPSLGYGVGFCRPTYLASRSCQSSCYRPTCGSGFYY.

A run of 5 repeats spans residues 46–55 (CQLGSSLYRG), 56–65 (CQQTCWEPTS), 66–75 (CQTSYVESSP), 76–85 (CQTSCYRPRT), and 92–101 (CQTTYSGSLG). Residues 46–101 (CQLGSSLYRGCQQTCWEPTSCQTSYVESSPCQTSCYRPRTSLLCSPCQTTYSGSLG) are 5 X 10 AA approximate repeats.

It belongs to the PMG family. In terms of assembly, interacts with hair keratins. As to expression, weak expression seen in the late matrix and entire cortex area of the hair follicle.

In terms of biological role, in the hair cortex, hair keratin intermediate filaments are embedded in an interfilamentous matrix, consisting of hair keratin-associated proteins (KRTAP), which are essential for the formation of a rigid and resistant hair shaft through their extensive disulfide bond cross-linking with abundant cysteine residues of hair keratins. The matrix proteins include the high-sulfur and high-glycine-tyrosine keratins. The polypeptide is Keratin-associated protein 13-1 (KRTAP13-1) (Homo sapiens (Human)).